Here is a 122-residue protein sequence, read N- to C-terminus: Small ribosomal subunit protein uS13 (122 aa).

The interval 93 to 122 is disordered; it reads RRGLPVRGQRTKTNARTRKGPKKTIAGKKK.

The protein belongs to the universal ribosomal protein uS13 family. In terms of assembly, part of the 30S ribosomal subunit. Forms a loose heterodimer with protein S19. Forms two bridges to the 50S subunit in the 70S ribosome.

Located at the top of the head of the 30S subunit, it contacts several helices of the 16S rRNA. In the 70S ribosome it contacts the 23S rRNA (bridge B1a) and protein L5 of the 50S subunit (bridge B1b), connecting the 2 subunits; these bridges are implicated in subunit movement. Contacts the tRNAs in the A and P-sites. In Corynebacterium kroppenstedtii (strain DSM 44385 / JCM 11950 / CIP 105744 / CCUG 35717), this protein is Small ribosomal subunit protein uS13.